A 654-amino-acid chain; its full sequence is Polyvinylalcohol dehydrogenase (654 aa).

Residues 1-32 form the signal peptide; sequence MGSHAWGGAVFSAATLIAFGSVVHASGTVAET. Positions 42–159 constitute a Cytochrome c domain; the sequence is ADQLDGETLY…AANQWNGWST (118 aa). Heme c is bound by residues Cys-55, Cys-58, and His-59.

It belongs to the bacterial PQQ dehydrogenase family. In terms of assembly, monomer. Pyrroloquinoline quinone is required as a cofactor.

The protein localises to the periplasm. It carries out the reaction a polyvinyl alcohol + 2n Fe(III)-[cytochrome c] = an oxidized polyvinyl alcohol + 2n Fe(II)-[cytochrome c] + 2n H(+). In terms of biological role, catalyzes the oxidation of polyvinyl alcohol (PVA) in the polyvinyl alcohol degradation pathway. This is Polyvinylalcohol dehydrogenase (pvadh) from Sphingopyxis sp. (strain 113P3).